We begin with the raw amino-acid sequence, 149 residues long: Flavodoxin YqcA (149 aa).

The Flavodoxin-like domain maps to 4 to 145; sequence IGIFVGTMYG…ESNPWVEQWG (142 aa). FMN is bound by residues 10–15 and 99–101; these read TMYGNS and NFC.

Belongs to the flavodoxin family. MioC subfamily. In terms of assembly, monomer. FMN serves as cofactor.

Its function is as follows. Probable electron transporter. This Escherichia coli (strain K12) protein is Flavodoxin YqcA (yqcA).